Reading from the N-terminus, the 463-residue chain is Asparagine--tRNA ligase (463 aa).

This sequence belongs to the class-II aminoacyl-tRNA synthetase family. As to quaternary structure, homodimer.

The protein resides in the cytoplasm. It catalyses the reaction tRNA(Asn) + L-asparagine + ATP = L-asparaginyl-tRNA(Asn) + AMP + diphosphate + H(+). The chain is Asparagine--tRNA ligase from Desulfitobacterium hafniense (strain Y51).